Reading from the N-terminus, the 312-residue chain is Olfactory receptor 2L5 (312 aa).

At M1–L24 the chain is on the extracellular side. A glycan (N-linked (GlcNAc...) asparagine) is linked at N5. A helical transmembrane segment spans residues F25–I48. Over F49–T56 the chain is Cytoplasmic. A helical membrane pass occupies residues P57–P78. The Extracellular portion of the chain corresponds to K79–Q99. Residues C96 and C188 are joined by a disulfide bond. Residues S100–Y119 traverse the membrane as a helical segment. The Cytoplasmic segment spans residues D120 to R138. Residues M139–A157 form a helical membrane-spanning segment. At H158 to Y194 the chain is on the extracellular side. Residues E195–G218 form a helical membrane-spanning segment. Over W219–K235 the chain is Cytoplasmic. A helical membrane pass occupies residues A236–Y258. Over L259–K271 the chain is Extracellular. The helical transmembrane segment at V272–L291 threads the bilayer. The Cytoplasmic segment spans residues R292 to M312.

Belongs to the G-protein coupled receptor 1 family.

It is found in the cell membrane. In terms of biological role, odorant receptor. The protein is Olfactory receptor 2L5 (OR2L5) of Homo sapiens (Human).